The sequence spans 547 residues: Natural resistance-associated macrophage protein 1 (547 aa).

Residues 1-30 form a disordered region; that stretch reads MTGDKDPQSVSRPNYGSISHPPSSEPQQEP. The Cytoplasmic segment spans residues 1-54; the sequence is MTGDKDPQSVSRPNYGSISHPPSSEPQQEPLRTTYLSEKIPIPDTEPGTFSLRK. A compositionally biased stretch (polar residues) spans 8–17; sequence QSVSRPNYGS. A compositionally biased stretch (low complexity) spans 21 to 30; the sequence is PPSSEPQQEP. The helical transmembrane segment at 55–75 threads the bilayer; that stretch reads LWAFTGPGFLMSIAFLDPGNI. Over 76 to 81 the chain is Extracellular; that stretch reads ESDLQA. Residues 82–102 form a helical membrane-spanning segment; that stretch reads GAVAGFKLLWVLLWATVLGLL. Over 103-139 the chain is Cytoplasmic; that stretch reads CQRLAARLGVVTGKDLGEICHLYYPKVPRTLLWLTIE. The helical transmembrane segment at 140-160 threads the bilayer; that stretch reads LAIVGSDMQEVIGTAIAFSLL. Topologically, residues 161 to 164 are extracellular; it reads SAGR. A helical transmembrane segment spans residues 165–185; that stretch reads IPLWGGVLITIVDTFFFLFLD. The Cytoplasmic segment spans residues 186–193; it reads NYGLRKLE. Residues 194-214 form a helical membrane-spanning segment; the sequence is AFFGILITIMALTFGYEYVVA. The Extracellular segment spans residues 215-240; it reads RPAQVALLQGLLLPSCPGCGRPELLQ. The chain crosses the membrane as a helical span at residues 241–261; that stretch reads AVGIVGAIIMPHNIYLHSALV. Residues 262–286 lie on the Cytoplasmic side of the membrane; that stretch reads KSREIDRSRRPDIREANMYFLIEAS. A helical membrane pass occupies residues 287–307; it reads IALSVSFFINLFVVAVFGQAF. At 308 to 346 the chain is on the extracellular side; that stretch reads YQQTNEAAFNVCANSSLHDYAKIFPRNNLTVEVDIYQGG. Asn321 and Asn335 each carry an N-linked (GlcNAc...) asparagine glycan. The helical transmembrane segment at 347 to 367 threads the bilayer; the sequence is VMLGCVFGPAALYIWAVGLLA. Over 368–394 the chain is Cytoplasmic; it reads AGQSSTMTGTYAGQFVMEGFLRLRWSR. A helical transmembrane segment spans residues 395–415; sequence FARVLLTRSCAILPTVLVVVF. The Extracellular portion of the chain corresponds to 416–432; sequence RDLKDLSGLNDLLNVLQ. The chain crosses the membrane as a helical span at residues 433–453; sequence SLLLPFAVLPILTFTSMPALM. The Cytoplasmic segment spans residues 454–464; it reads QEFANGRLSKA. A helical transmembrane segment spans residues 465-485; it reads ITSFIMALVCAINLYFVVIYL. Residues 486–492 are Extracellular-facing; the sequence is PSLPHPA. A helical membrane pass occupies residues 493–513; sequence YFILVALLAIVYLGLTTYLVW. The Cytoplasmic portion of the chain corresponds to 514–547; it reads TCFIAHGVTLLAHSSHQHFLYGLPDVEEKGKISG.

This sequence belongs to the NRAMP family.

It localises to the late endosome membrane. Its subcellular location is the lysosome membrane. It carries out the reaction Zn(2+)(in) + H(+)(out) = Zn(2+)(out) + H(+)(in). The catalysed reaction is Fe(2+)(in) + H(+)(out) = Fe(2+)(out) + H(+)(in). The enzyme catalyses Mn(2+)(in) + H(+)(out) = Mn(2+)(out) + H(+)(in). In terms of biological role, macrophage-specific antiporter that fluxes metal ions in either direction against a proton gradient. Localized to late endosomal lysosomal membranes, delivers bivalent cations from the cytosol into these acidic compartments where they may directly affect antimicrobial activity. Involved in iron metabolism and host natural resistance to infection with intracellular parasites. Pathogen resistance involves sequestration of Fe(2+) and Mn(2+), cofactors of both prokaryotic and eukaryotic catalases and superoxide dismutases, not only to protect the macrophage against its own generation of reactive oxygen species, but to deny the cations to the pathogen for synthesis of its protective enzymes. The chain is Natural resistance-associated macrophage protein 1 (SLC11A1) from Canis lupus familiaris (Dog).